Here is a 601-residue protein sequence, read N- to C-terminus: NADH-ubiquinone oxidoreductase chain 5 (601 aa).

Helical transmembrane passes span 3–23, 36–56, 84–104, 114–134, 140–160, 171–191, 201–221, 240–260, 272–292, 324–346, 365–385, 404–426, 456–476, 483–503, and 581–601; these read LIMP…MMSY, VTSS…MFLL, FFSI…MEFS, INQF…LVTA, LFIG…WWYG, AILY…WLLL, IFML…AAAG, TPVS…FLLV, ILTM…ICAL, AFLH…GSII, MPFT…MPFL, NAWA…TRLI, LALG…PLIT, LYMK…AMGL, and LIKL…MLII.

The protein belongs to the complex I subunit 5 family.

The protein localises to the mitochondrion inner membrane. The enzyme catalyses a ubiquinone + NADH + 5 H(+)(in) = a ubiquinol + NAD(+) + 4 H(+)(out). Its function is as follows. Core subunit of the mitochondrial membrane respiratory chain NADH dehydrogenase (Complex I) that is believed to belong to the minimal assembly required for catalysis. Complex I functions in the transfer of electrons from NADH to the respiratory chain. The immediate electron acceptor for the enzyme is believed to be ubiquinone. The sequence is that of NADH-ubiquinone oxidoreductase chain 5 (MT-ND5) from Dasypus novemcinctus (Nine-banded armadillo).